The following is a 343-amino-acid chain: Tetraacyldisaccharide 4'-kinase (343 aa).

61–68 (GVGGNGKT) contributes to the ATP binding site.

This sequence belongs to the LpxK family.

It catalyses the reaction a lipid A disaccharide + ATP = a lipid IVA + ADP + H(+). It participates in glycolipid biosynthesis; lipid IV(A) biosynthesis; lipid IV(A) from (3R)-3-hydroxytetradecanoyl-[acyl-carrier-protein] and UDP-N-acetyl-alpha-D-glucosamine: step 6/6. In terms of biological role, transfers the gamma-phosphate of ATP to the 4'-position of a tetraacyldisaccharide 1-phosphate intermediate (termed DS-1-P) to form tetraacyldisaccharide 1,4'-bis-phosphate (lipid IVA). This is Tetraacyldisaccharide 4'-kinase from Colwellia psychrerythraea (strain 34H / ATCC BAA-681) (Vibrio psychroerythus).